We begin with the raw amino-acid sequence, 449 residues long: uncharacterized protein (449 aa).

13 helical membrane-spanning segments follow: residues 1–21 (MVAN…ILLI), 26–46 (IHLT…HVIT), 51–71 (IDYI…MVLV), 97–117 (LLML…PNAT), 137–157 (FVPI…LTLV), 178–198 (FKLS…TPFL), 223–243 (VLMA…IGES), 244–264 (LPVP…ALLL), 285–305 (LIFF…GVTA), 310–330 (LLAV…VFTV), 340–360 (IPLV…IGFA), 377–397 (VLPL…GTLV), and 425–445 (GLPV…WLMF).

The protein belongs to the CitM (TC 2.A.11) transporter family.

Its subcellular location is the cell membrane. This is an uncharacterized protein from Synechocystis sp. (strain ATCC 27184 / PCC 6803 / Kazusa).